Consider the following 397-residue polypeptide: Calponin-like protein clik-2 (397 aa).

Calponin-like repeat units lie at residues 29 to 54 (LSQQ…RWNI), 73 to 98 (LRVQ…RFQV), 119 to 144 (IPKQ…RNQV), 161 to 189 (LCFQ…RQAT), 209 to 234 (TPWY…RDVL), and 255 to 280 (VPLQ…RNTQ). A disordered region spans residues 301–397 (EETKPPGSAS…EEEEEEEEDE (97 aa)). Residues 321 to 332 (KFEERESSRQSE) show a composition bias toward basic and acidic residues. Acidic residues-rich tracts occupy residues 344-360 (VEPE…EEKI) and 367-397 (EEEE…EEDE).

This sequence belongs to the calponin family. Expressed in pharyngeal muscle cells (at protein level).

Its function is as follows. Required for pharyngeal pumping. The sequence is that of Calponin-like protein clik-2 from Caenorhabditis elegans.